Reading from the N-terminus, the 580-residue chain is E3 ubiquitin-protein ligase TRIM45 (580 aa).

An RING-type zinc finger spans residues 29–98; sequence CPLCMGLFKA…QIGILCPVCD (70 aa). 2 consecutive B box-type zinc fingers follow at residues 130 to 176 and 186 to 227; these read GQGL…MVDL and GKPI…CDFT. Residues Cys-135, Cys-138, Cys-158, His-162, Cys-191, His-194, Cys-214, and His-219 each contribute to the Zn(2+) site. A coiled-coil region spans residues 281-335; the sequence is SEGYIKAIEEHRDKLLKQLEDIRVQKENSLQLQKAQLEQLLADMRTGVEFTEHLL. One copy of the Filamin repeat lies at 394-497; it reads TKEVDPAKCV…VQGSPFTVTV (104 aa).

It belongs to the TRIM/RBCC family.

Its subcellular location is the cytoplasm. It localises to the nucleus. The enzyme catalyses S-ubiquitinyl-[E2 ubiquitin-conjugating enzyme]-L-cysteine + [acceptor protein]-L-lysine = [E2 ubiquitin-conjugating enzyme]-L-cysteine + N(6)-ubiquitinyl-[acceptor protein]-L-lysine.. In terms of biological role, E3 ubiquitin-protein ligase that plays a role in the regulation of inflammatory response. Mechanistically, mediates the 'Lys-48'-linked polyubiquitination of TAB2, a regulatory protein of the kinase TAK1, leading to its degradation via the proteasomal pathway and inhibition of the TLR-mediated inflammatory immune response. May act as a transcriptional repressor in mitogen-activated protein kinase signaling pathway. This is E3 ubiquitin-protein ligase TRIM45 (TRIM45) from Bos taurus (Bovine).